We begin with the raw amino-acid sequence, 1108 residues long: Retinal guanylyl cyclase 1 (1108 aa).

Residues 1-54 (MSAWLLPAGGLPGAGFCVPARQSPSSFSRVLRWPRPGLPGLLLLLLLPSPSALS) form the signal peptide. Residues 55-465 (AVFKVGVLGP…PDVICNGGVE (411 aa)) lie on the Extracellular side of the membrane. Residues Cys-108 and Cys-136 are joined by a disulfide bond. N-linked (GlcNAc...) asparagine glycosylation occurs at Asn-300. A helical transmembrane segment spans residues 466-490 (PGLVFVGFLLVIGMGLTGAFLAHYL). A Protein kinase domain is found at 491–811 (RHRLLHMQMA…DLTFDLFKSI (321 aa)). The Cytoplasmic portion of the chain corresponds to 491–1108 (RHRLLHMQMA…KARPGQFTGK (618 aa)). The Guanylate cyclase domain maps to 883–1013 (TLYFSDIVGF…DTVNTASRME (131 aa)). Residues 1069–1108 (IPKPPDLQPGASNHGISLQEIPPERRKKLEKARPGQFTGK) form a disordered region.

The protein belongs to the adenylyl cyclase class-4/guanylyl cyclase family. In terms of assembly, homodimer; requires homodimerization for guanylyl cyclase activity. Interacts (via C-terminus) with RD3 (via C-terminus); promotes the exit of GUCY2E from the endoplasmic reticulum and its trafficking to the photoreceptor outer segments. Interaction with RD3 negatively regulates GUCY2E guanylate cyclase activity. Post-translationally, there are 9 conserved cysteine residues in sensory guanylate cyclases, 6 in the extracellular domain, which may be involved in intra- or interchain disulfide bonds.

It localises to the photoreceptor outer segment membrane. Its subcellular location is the endoplasmic reticulum membrane. It catalyses the reaction GTP = 3',5'-cyclic GMP + diphosphate. With respect to regulation, activated by GUCA1A when free calcium ions concentration is low, and inhibited by GUCA1A when free calcium ions concentration is high. Negatively regulated by RD3; RD3 inhibits the basal and GUCA1A-stimulated guanylate cyclase activity. Functionally, catalyzes the synthesis of cyclic GMP (cGMP) in rods and cones of photoreceptors. Plays an essential role in phototransduction, by mediating cGMP replenishment. May also participate in the trafficking of membrane-asociated proteins to the photoreceptor outer segment membrane. This chain is Retinal guanylyl cyclase 1 (Gucy2e), found in Mus musculus (Mouse).